Reading from the N-terminus, the 104-residue chain is Large ribosomal subunit protein bL21 (104 aa).

It belongs to the bacterial ribosomal protein bL21 family. In terms of assembly, part of the 50S ribosomal subunit. Contacts protein L20.

In terms of biological role, this protein binds to 23S rRNA in the presence of protein L20. In Clostridium botulinum (strain 657 / Type Ba4), this protein is Large ribosomal subunit protein bL21.